A 199-amino-acid polypeptide reads, in one-letter code: Ribosome biogenesis protein RLP24 (199 aa).

Positions 147–182 (KEQERAESVSEQEESEEEEEDMEIDSDEEEEEQLEK) are disordered. Residues 156 to 179 (SEQEESEEEEEDMEIDSDEEEEEQ) show a composition bias toward acidic residues. At Ser-172 the chain carries Phosphoserine.

This sequence belongs to the eukaryotic ribosomal protein eL24 family. In terms of assembly, associated with nucleolar and cytoplasmic pre-60S particles. At the end of biogenesis it dissociates from cytoplasmic pre-60S particles and is likely to be exchanged for its ribosomal homolog, RPL24. Interacts (via C-terminus) with AFG2 (hexameric form); the interaction is direct, recruits AFG2 to pre-60S ribosomal particles and promotes AFG2 ATPase activity and RLP24 release from pre-60S ribosomal particles. Interacts with NOG1; the interaction is direct.

Its subcellular location is the cytoplasm. It is found in the nucleus. Its function is as follows. Involved in the biogenesis of the 60S ribosomal subunit. Ensures the docking of NOG1 to pre-60S ribosomal particles. Activates and recruits ATPase AFG2 to cytoplasmic pre-60S ribosomal particles. This is Ribosome biogenesis protein RLP24 (RLP24) from Saccharomyces cerevisiae (strain ATCC 204508 / S288c) (Baker's yeast).